The chain runs to 362 residues: Holliday junction branch migration complex subunit RuvB (362 aa).

The disordered stretch occupies residues 1–20; that stretch reads MKRTIMTNTDTFEQPNTGAN. The large ATPase domain (RuvB-L) stretch occupies residues 15-203; sequence PNTGANEESL…FGFTAHLDFY (189 aa). ATP is bound by residues L42, R43, G84, K87, T88, T89, 150–152, R193, Y203, and R240; that span reads EDF. A Mg(2+)-binding site is contributed by T88. The small ATPAse domain (RuvB-S) stretch occupies residues 204–274; it reads PHEELEKLIE…DVKEALALYQ (71 aa). The interval 277 to 362 is head domain (RuvB-H); the sequence is TEGLDRLDIA…ESAYDVNEMS (86 aa). DNA contacts are provided by R332 and R337.

It belongs to the RuvB family. As to quaternary structure, homohexamer. Forms an RuvA(8)-RuvB(12)-Holliday junction (HJ) complex. HJ DNA is sandwiched between 2 RuvA tetramers; dsDNA enters through RuvA and exits via RuvB. An RuvB hexamer assembles on each DNA strand where it exits the tetramer. Each RuvB hexamer is contacted by two RuvA subunits (via domain III) on 2 adjacent RuvB subunits; this complex drives branch migration. In the full resolvosome a probable DNA-RuvA(4)-RuvB(12)-RuvC(2) complex forms which resolves the HJ.

Its subcellular location is the cytoplasm. The catalysed reaction is ATP + H2O = ADP + phosphate + H(+). The RuvA-RuvB-RuvC complex processes Holliday junction (HJ) DNA during genetic recombination and DNA repair, while the RuvA-RuvB complex plays an important role in the rescue of blocked DNA replication forks via replication fork reversal (RFR). RuvA specifically binds to HJ cruciform DNA, conferring on it an open structure. The RuvB hexamer acts as an ATP-dependent pump, pulling dsDNA into and through the RuvAB complex. RuvB forms 2 homohexamers on either side of HJ DNA bound by 1 or 2 RuvA tetramers; 4 subunits per hexamer contact DNA at a time. Coordinated motions by a converter formed by DNA-disengaged RuvB subunits stimulates ATP hydrolysis and nucleotide exchange. Immobilization of the converter enables RuvB to convert the ATP-contained energy into a lever motion, pulling 2 nucleotides of DNA out of the RuvA tetramer per ATP hydrolyzed, thus driving DNA branch migration. The RuvB motors rotate together with the DNA substrate, which together with the progressing nucleotide cycle form the mechanistic basis for DNA recombination by continuous HJ branch migration. Branch migration allows RuvC to scan DNA until it finds its consensus sequence, where it cleaves and resolves cruciform DNA. In Bifidobacterium adolescentis (strain ATCC 15703 / DSM 20083 / NCTC 11814 / E194a), this protein is Holliday junction branch migration complex subunit RuvB.